A 331-amino-acid chain; its full sequence is NADH-quinone oxidoreductase subunit H (331 aa).

Helical transmembrane passes span 6-26 (FFIVETIIKAVVILSVIATLA), 45-65 (GPWMVGPAGVLQIVADMIKLF), 78-98 (FIFLIAPIISASCAFVAMSVI), 120-140 (IGILFLLSVSGTCVYGTLIGG), 167-187 (GLSLIPVIMMVGSLSLIDIVH), 193-213 (ITSWFLIKQPVCFVLFTIAAF), 241-261 (MRWGMFFIGEYANMITYSIVI), 263-283 (LIFLGGFNSFWFIPGSLMIFL), and 311-331 (CWKICMPIALICIFVTAFVII).

Belongs to the complex I subunit 1 family. NDH-1 is composed of 14 different subunits. Subunits NuoA, H, J, K, L, M, N constitute the membrane sector of the complex.

The protein resides in the cell inner membrane. The enzyme catalyses a quinone + NADH + 5 H(+)(in) = a quinol + NAD(+) + 4 H(+)(out). Its function is as follows. NDH-1 shuttles electrons from NADH, via FMN and iron-sulfur (Fe-S) centers, to quinones in the respiratory chain. The immediate electron acceptor for the enzyme in this species is believed to be ubiquinone. Couples the redox reaction to proton translocation (for every two electrons transferred, four hydrogen ions are translocated across the cytoplasmic membrane), and thus conserves the redox energy in a proton gradient. This subunit may bind ubiquinone. This Campylobacter hominis (strain ATCC BAA-381 / DSM 21671 / CCUG 45161 / LMG 19568 / NCTC 13146 / CH001A) protein is NADH-quinone oxidoreductase subunit H.